The chain runs to 187 residues: Elongation factor P (187 aa).

Belongs to the elongation factor P family.

The protein localises to the cytoplasm. The protein operates within protein biosynthesis; polypeptide chain elongation. Functionally, involved in peptide bond synthesis. Stimulates efficient translation and peptide-bond synthesis on native or reconstituted 70S ribosomes in vitro. Probably functions indirectly by altering the affinity of the ribosome for aminoacyl-tRNA, thus increasing their reactivity as acceptors for peptidyl transferase. The polypeptide is Elongation factor P (Desulfotalea psychrophila (strain LSv54 / DSM 12343)).